The chain runs to 507 residues: FLYWCH transcription factor 1 (507 aa).

Over residues 1–26 (MYSPESMNSNISSPSPPSSSSLNAPS) the composition is skewed to low complexity. The interval 1–51 (MYSPESMNSNISSPSPPSSSSLNAPSLADAPEVRSDDGEAETSEPSTSVTA) is disordered. An FLYWCH-type zinc finger spans residues 135–192 (KKTRLKVFSNGFFMTFDKLSSCQKKYFWRCEYKNTCKARMHTDIVTEKILTFIHEHNH).

Its function is as follows. Probable transcription factor. Binds to the DNA sequence motif 5'-[AG]GGCGCCG-3' in the promoters of target genes, including micro-RNA genes, in order to repress expression, and acting redundantly with flh-2. This Caenorhabditis elegans protein is FLYWCH transcription factor 1.